The following is a 277-amino-acid chain: Pantothenate synthetase (277 aa).

26–33 is an ATP binding site; the sequence is MGNLHEGH. Histidine 33 functions as the Proton donor in the catalytic mechanism. Glutamine 57 lines the (R)-pantoate pocket. Glutamine 57 contacts beta-alanine. 144–147 contributes to the ATP binding site; sequence GKKD. Glutamine 150 is a (R)-pantoate binding site. ATP is bound by residues glycine 173 and 181–184; that span reads LSSR.

Belongs to the pantothenate synthetase family. As to quaternary structure, homodimer.

Its subcellular location is the cytoplasm. The enzyme catalyses (R)-pantoate + beta-alanine + ATP = (R)-pantothenate + AMP + diphosphate + H(+). It participates in cofactor biosynthesis; (R)-pantothenate biosynthesis; (R)-pantothenate from (R)-pantoate and beta-alanine: step 1/1. Catalyzes the condensation of pantoate with beta-alanine in an ATP-dependent reaction via a pantoyl-adenylate intermediate. The polypeptide is Pantothenate synthetase (Chromobacterium violaceum (strain ATCC 12472 / DSM 30191 / JCM 1249 / CCUG 213 / NBRC 12614 / NCIMB 9131 / NCTC 9757 / MK)).